The following is an 856-amino-acid chain: Protein phosphatase 2C 32 (856 aa).

Residues Ser-152, Ser-189, and Ser-201 each carry the phosphoserine modification. The PPM-type phosphatase domain occupies 269-835 (ESCLESNRNL…DDVSVMVVSL (567 aa)). Asp-307 and Gly-308 together coordinate Mn(2+). Disordered regions lie at residues 340 to 373 (PSED…KSVV), 388 to 407 (GNTD…GPGK), and 446 to 485 (NPST…QISS). Residues 395 to 407 (ADGPPGDSAGPGK) are compositionally biased toward low complexity. A compositionally biased stretch (polar residues) spans 471–485 (NSGQRHGTKKSQISS). Residues Asp-763 and Asp-826 each contribute to the Mn(2+) site.

The protein belongs to the PP2C family. Requires Mg(2+) as cofactor. The cofactor is Mn(2+). As to expression, expressed in roots, leaves, stems, inflorescences, flowers and throughout the shoot meristem.

It is found in the nucleus. The catalysed reaction is O-phospho-L-seryl-[protein] + H2O = L-seryl-[protein] + phosphate. The enzyme catalyses O-phospho-L-threonyl-[protein] + H2O = L-threonyl-[protein] + phosphate. Insensitive to okadaic acid. In terms of biological role, involved in the regulation of pedicel length and of CLAVATA pathways controlling stem cell identity at shoot and flower meristems. This chain is Protein phosphatase 2C 32 (POL), found in Arabidopsis thaliana (Mouse-ear cress).